Here is a 133-residue protein sequence, read N- to C-terminus: ATP synthase epsilon chain (133 aa).

This sequence belongs to the ATPase epsilon chain family. F-type ATPases have 2 components, CF(1) - the catalytic core - and CF(0) - the membrane proton channel. CF(1) has five subunits: alpha(3), beta(3), gamma(1), delta(1), epsilon(1). CF(0) has three main subunits: a, b and c.

It is found in the cell inner membrane. Produces ATP from ADP in the presence of a proton gradient across the membrane. This is ATP synthase epsilon chain from Desulfosudis oleivorans (strain DSM 6200 / JCM 39069 / Hxd3) (Desulfococcus oleovorans).